The chain runs to 454 residues: MSHNDTIVAQATPPGRGGVGILRISGLKARDVAQEVLGKLPKPRYADYLPFKDVDGSALDQGIALWFPGPNSFTGEDVLELQGHGGPVILDLLLKRILTLPGVRIARPGEFSERAFLNDKLDLAQAEAIADLIDASSEQAARSALNSLQGAFSARVNHLVEALTHLRIYVEAAIDFPDEEIDFLSDGKIEAQLNGVIADLDAVRTEARQGSLLREGMKVVIAGRPNAGKSSLLNALAGREAAIVTDIAGTTRDVLREHIHIDGMPLHIIDTAGLRDANDEVERIGIERAWQEIEQADRVLFMVDGTTTDAVDPADIWPDFIARLPKNLPITVVRNKADITGETLGISEVNGHSLVRLSARTGEGVDVLRNHLKQSMGFDTNMEGGFLARRRHLQALAEAANHLEQGKAQLLGAWAGELLAEELRLAQQSLSEITGEFTSDDLLGRIFSSFCIGK.

Residues arginine 23, glutamate 80, and lysine 120 each contribute to the (6S)-5-formyl-5,6,7,8-tetrahydrofolate site. The TrmE-type G domain maps to 216 to 377 (GMKVVIAGRP…LRNHLKQSMG (162 aa)). Asparagine 226 serves as a coordination point for K(+). GTP is bound by residues 226-231 (NAGKSS), 245-251 (TDIAGTT), 270-273 (DTAG), 335-338 (NKAD), and 358-360 (SAR). A Mg(2+)-binding site is contributed by serine 230. K(+) contacts are provided by threonine 245, isoleucine 247, and threonine 250. A Mg(2+)-binding site is contributed by threonine 251. Position 454 (lysine 454) interacts with (6S)-5-formyl-5,6,7,8-tetrahydrofolate.

Belongs to the TRAFAC class TrmE-Era-EngA-EngB-Septin-like GTPase superfamily. TrmE GTPase family. As to quaternary structure, homodimer. Heterotetramer of two MnmE and two MnmG subunits. K(+) serves as cofactor.

The protein localises to the cytoplasm. Its function is as follows. Exhibits a very high intrinsic GTPase hydrolysis rate. Involved in the addition of a carboxymethylaminomethyl (cmnm) group at the wobble position (U34) of certain tRNAs, forming tRNA-cmnm(5)s(2)U34. The polypeptide is tRNA modification GTPase MnmE (Salmonella typhi).